We begin with the raw amino-acid sequence, 130 residues long: Methylglyoxal synthase (130 aa).

One can recognise an MGS-like domain in the interval 1–130 (MSKPRIALIA…DLARNMQDVC (130 aa)). Substrate-binding positions include histidine 11, lysine 15, 37–40 (TGTT), and 57–58 (SG). The active-site Proton donor/acceptor is aspartate 63. A substrate-binding site is contributed by histidine 90.

Belongs to the methylglyoxal synthase family.

It catalyses the reaction dihydroxyacetone phosphate = methylglyoxal + phosphate. Functionally, catalyzes the formation of methylglyoxal from dihydroxyacetone phosphate. This chain is Methylglyoxal synthase, found in Burkholderia cenocepacia (strain HI2424).